The sequence spans 356 residues: Probable neutral protease 2 homolog TRV_06370 (356 aa).

The signal sequence occupies residues 1 to 17 (MQFTALLAALGAPLALA). The propeptide occupies 18–183 (ASIPAAAHNH…DDSTGVIDKR (166 aa)). 2 disulfide bridges follow: Cys-191–Cys-262 and Cys-269–Cys-287. A Zn(2+)-binding site is contributed by His-311. The active site involves Glu-312. Zn(2+) is bound by residues His-315 and Asp-326.

This sequence belongs to the peptidase M35 family. It depends on Zn(2+) as a cofactor.

The protein localises to the secreted. The catalysed reaction is Preferential cleavage of bonds with hydrophobic residues in P1'. Also 3-Asn-|-Gln-4 and 8-Gly-|-Ser-9 bonds in insulin B chain.. Functionally, probable secreted metalloprotease that shows high activities on basic nuclear substrates such as histone and protamine. May be involved in virulence. This chain is Probable neutral protease 2 homolog TRV_06370, found in Trichophyton verrucosum (strain HKI 0517).